The primary structure comprises 183 residues: Large ribosomal subunit protein uL5 (183 aa).

It belongs to the universal ribosomal protein uL5 family. In terms of assembly, part of the 50S ribosomal subunit; part of the 5S rRNA/L5/L18/L25 subcomplex. Contacts the 5S rRNA and the P site tRNA. Forms a bridge to the 30S subunit in the 70S ribosome.

In terms of biological role, this is one of the proteins that bind and probably mediate the attachment of the 5S RNA into the large ribosomal subunit, where it forms part of the central protuberance. In the 70S ribosome it contacts protein S13 of the 30S subunit (bridge B1b), connecting the 2 subunits; this bridge is implicated in subunit movement. Contacts the P site tRNA; the 5S rRNA and some of its associated proteins might help stabilize positioning of ribosome-bound tRNAs. The sequence is that of Large ribosomal subunit protein uL5 from Leptospira biflexa serovar Patoc (strain Patoc 1 / Ames).